Here is a 307-residue protein sequence, read N- to C-terminus: Mitochondrial glycine transporter YMC1 (307 aa).

Solcar repeat units follow at residues 26 to 106 (VKDL…MKRF), 121 to 204 (PQYY…LIAN), and 218 to 305 (PAWK…AMRL). The next 6 membrane-spanning stretches (helical) occupy residues 29–49 (LLAGTAGGIAQVLVGQPFDTT), 83–103 (LTPLIGVGACVSLQFGVNEAM), 118–138 (LSLPQYYACGVTGGIVNSFLA), 183–203 (TILREGHGCGTYFLVYEALIA), 223–243 (CIFGALSGTALWLMVYPLDVI), and 277–298 (FFKGFGPTMLRAAPANGATFAT).

The protein belongs to the mitochondrial carrier (TC 2.A.29) family.

The protein localises to the mitochondrion inner membrane. Its function is as follows. Secondary mitochondrial glycine transporter required for the biosynthesis of heme at high glycine concentrations. Imports the precursor glycine into the mitochondrial matrix, where it is condensed with succinyl-CoA to produce 5-aminolevulinate (ALA), the first step of heme biosynthesis. The polypeptide is Mitochondrial glycine transporter YMC1 (Saccharomyces cerevisiae (strain ATCC 204508 / S288c) (Baker's yeast)).